Reading from the N-terminus, the 341-residue chain is GTPase Obg (341 aa).

The Obg domain maps to 1–159 (MKFVDEALIK…RNLRLELRVL (159 aa)). The interval 128-150 (TRYKSSVNRSPRQTTPGSPGESR) is disordered. The span at 129 to 144 (RYKSSVNRSPRQTTPG) shows a compositional bias: polar residues. In terms of domain architecture, OBG-type G spans 160–334 (ADVGLLGLPN…LCYALMQLID (175 aa)). GTP is bound by residues 166–173 (GLPNAGKS), 191–195 (FTTLH), 213–216 (DIPG), 283–286 (NKID), and 315–317 (SAI). Mg(2+) contacts are provided by Ser-173 and Thr-193.

Belongs to the TRAFAC class OBG-HflX-like GTPase superfamily. OBG GTPase family. As to quaternary structure, monomer. Mg(2+) is required as a cofactor.

It is found in the cytoplasm. Its function is as follows. An essential GTPase which binds GTP, GDP and possibly (p)ppGpp with moderate affinity, with high nucleotide exchange rates and a fairly low GTP hydrolysis rate. Plays a role in control of the cell cycle, stress response, ribosome biogenesis and in those bacteria that undergo differentiation, in morphogenesis control. This is GTPase Obg from Legionella pneumophila (strain Paris).